Consider the following 296-residue polypeptide: uncharacterized protein (296 aa).

Residues 1–60 (MDPKISYFQTFIVASKTKSFSKAAKRLGITQGTVSNHISALEKYFDAQLFLRTPEGVDLT) enclose the HTH lysR-type domain. A DNA-binding region (H-T-H motif) is located at residues 20–39 (FSKAAKRLGITQGTVSNHIS).

Belongs to the LysR transcriptional regulatory family.

This is an uncharacterized protein from Methanocaldococcus jannaschii (strain ATCC 43067 / DSM 2661 / JAL-1 / JCM 10045 / NBRC 100440) (Methanococcus jannaschii).